The following is a 344-amino-acid chain: tRNA dimethylallyltransferase (344 aa).

19–26 (GPTASGKT) contacts ATP. Residue 21 to 26 (TASGKT) coordinates substrate.

The protein belongs to the IPP transferase family. In terms of assembly, monomer. It depends on Mg(2+) as a cofactor.

The enzyme catalyses adenosine(37) in tRNA + dimethylallyl diphosphate = N(6)-dimethylallyladenosine(37) in tRNA + diphosphate. Its function is as follows. Catalyzes the transfer of a dimethylallyl group onto the adenine at position 37 in tRNAs that read codons beginning with uridine, leading to the formation of N6-(dimethylallyl)adenosine (i(6)A). The protein is tRNA dimethylallyltransferase of Bifidobacterium animalis subsp. lactis (strain AD011).